Reading from the N-terminus, the 540-residue chain is Probable pectinesterase/pectinesterase inhibitor 60 (540 aa).

An N-terminal signal peptide occupies residues 1–31 (MNIMMVQNISFLSLHLLLILLLCLRPLTTVA). The segment at 32-185 (DGNSTNIDGW…SHLISNCLAV (154 aa)) is pectinesterase inhibitor 60. Residues Asn-34, Asn-91, Asn-95, Asn-120, Asn-161, and Asn-195 are each glycosylated (N-linked (GlcNAc...) asparagine). A pectinesterase 60 region spans residues 225–526 (NLVVAKDGSG…FSVGKFIAGT (302 aa)). Substrate contacts are provided by Thr-302 and Gln-332. Asp-355 functions as the Proton donor; for pectinesterase activity in the catalytic mechanism. Cys-369 and Cys-389 form a disulfide bridge. The active-site Nucleophile; for pectinesterase activity is the Asp-376. 2 residues coordinate substrate: Arg-444 and Trp-446.

In the N-terminal section; belongs to the PMEI family. The protein in the C-terminal section; belongs to the pectinesterase family. As to expression, expressed in siliques.

The protein resides in the secreted. It localises to the cell wall. The enzyme catalyses [(1-&gt;4)-alpha-D-galacturonosyl methyl ester](n) + n H2O = [(1-&gt;4)-alpha-D-galacturonosyl](n) + n methanol + n H(+). It participates in glycan metabolism; pectin degradation; 2-dehydro-3-deoxy-D-gluconate from pectin: step 1/5. Its function is as follows. Acts in the modification of cell walls via demethylesterification of cell wall pectin. This chain is Probable pectinesterase/pectinesterase inhibitor 60 (PME60), found in Arabidopsis thaliana (Mouse-ear cress).